Reading from the N-terminus, the 138-residue chain is ATP synthase epsilon chain (138 aa).

It belongs to the ATPase epsilon chain family. In terms of assembly, F-type ATPases have 2 components, CF(1) - the catalytic core - and CF(0) - the membrane proton channel. CF(1) has five subunits: alpha(3), beta(3), gamma(1), delta(1), epsilon(1). CF(0) has three main subunits: a, b and c.

Its subcellular location is the cell inner membrane. Produces ATP from ADP in the presence of a proton gradient across the membrane. The polypeptide is ATP synthase epsilon chain (Cupriavidus pinatubonensis (strain JMP 134 / LMG 1197) (Cupriavidus necator (strain JMP 134))).